The following is a 437-amino-acid chain: Kynureninase (437 aa).

Residues leucine 99, threonine 100, 127-130, serine 183, aspartate 212, histidine 215, and tyrosine 237 contribute to the pyridoxal 5'-phosphate site; that span reads FPSD. Lysine 238 is subject to N6-(pyridoxal phosphate)lysine. Tryptophan 267 and asparagine 295 together coordinate pyridoxal 5'-phosphate.

The protein belongs to the kynureninase family. In terms of assembly, homodimer. Pyridoxal 5'-phosphate serves as cofactor.

Its subcellular location is the cytoplasm. It catalyses the reaction L-kynurenine + H2O = anthranilate + L-alanine + H(+). The enzyme catalyses 3-hydroxy-L-kynurenine + H2O = 3-hydroxyanthranilate + L-alanine + H(+). The protein operates within amino-acid degradation; L-kynurenine degradation; L-alanine and anthranilate from L-kynurenine: step 1/1. It functions in the pathway cofactor biosynthesis; NAD(+) biosynthesis; quinolinate from L-kynurenine: step 2/3. Functionally, catalyzes the cleavage of L-kynurenine (L-Kyn) and L-3-hydroxykynurenine (L-3OHKyn) into anthranilic acid (AA) and 3-hydroxyanthranilic acid (3-OHAA), respectively. The protein is Kynureninase of Yarrowia lipolytica (strain CLIB 122 / E 150) (Yeast).